We begin with the raw amino-acid sequence, 592 residues long: MFGRTHYCGEVTDMAIGQTVRLKGWVQKRRDLGGLIFIDLRDRTGIVQIVFSPDVSKEALQVAETIRSEYVLDVEGTVVQREEGQVNPNLPTGTIEVHAMHVTILSEAKTPPFLISDKTDVSEDVRLKYRYLDLRRPVMFQTFKMRHQVTKAIRDFLDEEGFLEVETPILTKSTPEGARDYLVPSRVHPGEFYALPQSPQIFKQLLMVAGFERYYQIARCFRDEDLRADRQPEFTQVDIETSFMSQDDILAMIERMMARVMKVAKGVDISIPFPRMSYDEAIARYGSDKPDTRFGLELVDLSEQVKDCGFKVFASAVQNGGQVKAINVKGAADKYSRKDIDALTEYVARYGAKGLAWLKVEADGLKGPIAKFFTEDEQKQMMQTLEAETGDLLLFVADKKSVVADALGALRLKLGKDLQLIDESAFHFLWITDWPLFEYDEEEGRYYAAHHPFTMPVREDVPKFETDPASVRAQAYDLVLNGYELGGGSLRIFERDIQEKMFKTLGFTEEQAREQFGFLLEAFEYGTPPHGGIALGLDRLVMLLAGRSNLRDTIAFPKTASASCLLTEAPSAVSEEQLEELHLRIKDVQKVD.

Glu176 contributes to the L-aspartate binding site. Positions 200 to 203 (QIFK) are aspartate. Arg222 is an L-aspartate binding site. ATP-binding positions include 222 to 224 (RDE) and Gln231. Residue His450 participates in L-aspartate binding. Residue Glu484 coordinates ATP. L-aspartate is bound at residue Arg491. 536 to 539 (GLDR) is an ATP binding site.

Belongs to the class-II aminoacyl-tRNA synthetase family. Type 1 subfamily. As to quaternary structure, homodimer.

It localises to the cytoplasm. It catalyses the reaction tRNA(Asx) + L-aspartate + ATP = L-aspartyl-tRNA(Asx) + AMP + diphosphate. Functionally, aspartyl-tRNA synthetase with relaxed tRNA specificity since it is able to aspartylate not only its cognate tRNA(Asp) but also tRNA(Asn). Reaction proceeds in two steps: L-aspartate is first activated by ATP to form Asp-AMP and then transferred to the acceptor end of tRNA(Asp/Asn). The sequence is that of Aspartate--tRNA(Asp/Asn) ligase from Anoxybacillus flavithermus (strain DSM 21510 / WK1).